The primary structure comprises 444 residues: MSLNPSRPSSSELVELHVFYVPEGSWNYKLNTISIEVINNFISAGFIRVSPQLTLQALRERLGEFLGVDAVAEKFLFLKCIGNNLAVVKEKQESELKLKSFAPPYALQPELYLLPVIDHLGNVYSASTVTLDEQESINDTTEINGTIYRPDSVSLSKDEPGNPSLLENTWRDFTNQEEAEESQPTQNHFGNSKLLGSLEESNDYFGNLKSPFLWKNDDEEEDEEKDNAALSRRQATLVCDKECTALPDLIDFPSFPSQRVSSRLTDTSLLKIEREKIIEQMKQVKEERKYLENIREELIKKVDKLFEQNKSKRYHASDSWKKKYLDTKKVTASLEEVLTKLREDLELYYKKLLMQLEAREIKMRPRNLANISDSKNYLIIQITEVQHAIDQLKRKLDTDKMKLILEVKMRKQAVSDLQTLKADLTQKKMGAPFRPPMFSGSVPT.

A coiled-coil region spans residues 268–403 (SLLKIEREKI…RKLDTDKMKL (136 aa)).

In terms of assembly, interacts with IFT20. Highly abundant in the testis, and is also expressed in the heart and kidney (at protein level).

It localises to the cytoplasmic vesicle. The protein resides in the secretory vesicle. It is found in the acrosome. The polypeptide is Spermatogenesis-associated protein 1 (Spata1) (Mus musculus (Mouse)).